Consider the following 4008-residue polypeptide: Extracellular matrix organizing protein FRAS1 (4008 aa).

The N-terminal stretch at Met-1–Gly-26 is a signal peptide. VWFC domains lie at Ala-27–Val-88, Gly-93–Val-153, Lys-157–Ser-217, Arg-219–Val-279, and Gly-283–Ile-343. Residues Ala-27–Ser-3901 lie on the Extracellular side of the membrane. At Ser-344 the chain carries Phosphoserine. A VWFC 6 domain is found at Gly-347–Thr-417. The N-linked (GlcNAc...) asparagine glycan is linked to Asn-361. 14 FU repeats span residues Lys-409–Gln-460, Gly-462–Gln-505, Arg-507–Asn-553, Gln-555–Ala-599, Thr-602–Ser-647, His-649–Leu-705, Thr-708–His-753, Glu-755–Leu-800, Val-803–Ala-852, Arg-854–Leu-900, Asn-903–Leu-948, Thr-952–Gln-997, Ser-999–Ala-1042, and Lys-1046–Val-1089. Asn-728 is a glycosylation site (N-linked (GlcNAc...) asparagine). N-linked (GlcNAc...) asparagine glycans are attached at residues Asn-1093 and Asn-1108. 7 CSPG repeats span residues Thr-1102–Ser-1197, Ala-1217–Asn-1308, Gly-1329–Ser-1438, Ala-1463–Ala-1559, Pro-1595–Thr-1689, Gly-1710–Ser-1810, and Pro-1833–Ser-1936. The N-linked (GlcNAc...) asparagine glycan is linked to Asn-1504. N-linked (GlcNAc...) asparagine glycosylation occurs at Asn-1777. 2 N-linked (GlcNAc...) asparagine glycosylation sites follow: Asn-1948 and Asn-1978. CSPG repeat units follow at residues Glu-1957–Thr-2057, Thr-2078–Val-2177, Pro-2199–Ser-2291, Ser-2311–Ser-2404, and Thr-2439–Lys-2536. 5 consecutive Calx-beta domains span residues Val-2543–Ser-2646, Ala-2659–Ala-2770, Ala-2784–Ser-2890, Ile-2905–Gly-3007, and Ala-3025–Gly-3129. Asn-2563, Asn-2664, and Asn-2682 each carry an N-linked (GlcNAc...) asparagine glycan. N-linked (GlcNAc...) asparagine glycans are attached at residues Asn-2908, Asn-2985, Asn-3070, Asn-3218, Asn-3676, and Asn-3875. A helical transmembrane segment spans residues Ile-3902–Ile-3922. At Asn-3923–Val-4008 the chain is on the cytoplasmic side.

This sequence belongs to the FRAS1 family. In terms of tissue distribution, expressed in many adult tissues, with highest levels in kidney, pancreas and thalamus. Relatively high expression was also detected in fetal kidney and heart.

The protein localises to the cell membrane. Functionally, involved in extracellular matrix organization. Required for the regulation of epidermal-basement membrane adhesion responsible for proper organogenesis during embryonic development. Involved in brain organization and function. The sequence is that of Extracellular matrix organizing protein FRAS1 from Homo sapiens (Human).